Here is a 113-residue protein sequence, read N- to C-terminus: U-scoloptoxin(16)-Sa1a (113 aa).

Residues 1-29 (MAPPSNPLFVVLCWALFAYLMLVLRDIQA) form the signal peptide.

It belongs to the scoloptoxin-16 family. In terms of processing, contains 4 disulfide bonds. In terms of tissue distribution, expressed by the venom gland.

The protein localises to the secreted. The polypeptide is U-scoloptoxin(16)-Sa1a (Scolopendra alternans (Florida Keys giant centipede)).